The following is a 396-amino-acid chain: Probable glucan endo-1,6-beta-glucosidase B (396 aa).

A signal peptide spans 1–17 (MIRRLAAFSALSGLATA). Asn30 carries an N-linked (GlcNAc...) asparagine glycan. The active-site Proton donor is the Glu219. Residue Asn272 is glycosylated (N-linked (GlcNAc...) asparagine). The Nucleophile role is filled by Glu320.

It belongs to the glycosyl hydrolase 5 (cellulase A) family.

Its subcellular location is the secreted. It carries out the reaction Random hydrolysis of (1-&gt;6)-linkages in (1-&gt;6)-beta-D-glucans.. Functionally, beta-glucanases participate in the metabolism of beta-glucan, the main structural component of the cell wall. Acts on lutean, pustulan and 1,6-oligo-beta-D-glucosides. The chain is Probable glucan endo-1,6-beta-glucosidase B (exgB) from Aspergillus fumigatus (strain CBS 144.89 / FGSC A1163 / CEA10) (Neosartorya fumigata).